A 170-amino-acid chain; its full sequence is ATP synthase subunit b (170 aa).

A helical membrane pass occupies residues 30-50; that stretch reads FFFVLAIFLVVLGVIGTFVVP.

This sequence belongs to the ATPase B chain family. As to quaternary structure, F-type ATPases have 2 components, F(1) - the catalytic core - and F(0) - the membrane proton channel. F(1) has five subunits: alpha(3), beta(3), gamma(1), delta(1), epsilon(1). F(0) has three main subunits: a(1), b(2) and c(10-14). The alpha and beta chains form an alternating ring which encloses part of the gamma chain. F(1) is attached to F(0) by a central stalk formed by the gamma and epsilon chains, while a peripheral stalk is formed by the delta and b chains.

The protein resides in the cell membrane. Its function is as follows. F(1)F(0) ATP synthase produces ATP from ADP in the presence of a proton or sodium gradient. F-type ATPases consist of two structural domains, F(1) containing the extramembraneous catalytic core and F(0) containing the membrane proton channel, linked together by a central stalk and a peripheral stalk. During catalysis, ATP synthesis in the catalytic domain of F(1) is coupled via a rotary mechanism of the central stalk subunits to proton translocation. In terms of biological role, component of the F(0) channel, it forms part of the peripheral stalk, linking F(1) to F(0). This Mycobacterium leprae (strain TN) protein is ATP synthase subunit b.